The primary structure comprises 239 residues: Type II restriction enzyme Eco47II (239 aa).

It carries out the reaction Endonucleolytic cleavage of DNA to give specific double-stranded fragments with terminal 5'-phosphates.. A P subtype restriction enzyme that recognizes the double-stranded sequence 5'-GGNCC-3'; the cleavage site is unknown. The chain is Type II restriction enzyme Eco47II from Escherichia coli.